A 526-amino-acid chain; its full sequence is Peptide chain release factor 3 (526 aa).

Residues 9 to 277 (DKRRTFAIIS…GIVEWAPKPL (269 aa)) form the tr-type G domain. GTP is bound by residues 18–25 (SHPDAGKT), 86–90 (DTPGH), and 140–143 (NKCD).

Belongs to the TRAFAC class translation factor GTPase superfamily. Classic translation factor GTPase family. PrfC subfamily.

The protein resides in the cytoplasm. Its function is as follows. Increases the formation of ribosomal termination complexes and stimulates activities of RF-1 and RF-2. It binds guanine nucleotides and has strong preference for UGA stop codons. It may interact directly with the ribosome. The stimulation of RF-1 and RF-2 is significantly reduced by GTP and GDP, but not by GMP. This is Peptide chain release factor 3 from Shewanella frigidimarina (strain NCIMB 400).